A 317-amino-acid polypeptide reads, in one-letter code: Beta-ketoacyl-[acyl-carrier-protein] synthase III (317 aa).

Active-site residues include Cys112 and His244. The tract at residues 245 to 249 (QANLR) is ACP-binding. The active site involves Asn274.

This sequence belongs to the thiolase-like superfamily. FabH family. Homodimer.

It is found in the cytoplasm. It catalyses the reaction malonyl-[ACP] + acetyl-CoA + H(+) = 3-oxobutanoyl-[ACP] + CO2 + CoA. It participates in lipid metabolism; fatty acid biosynthesis. Catalyzes the condensation reaction of fatty acid synthesis by the addition to an acyl acceptor of two carbons from malonyl-ACP. Catalyzes the first condensation reaction which initiates fatty acid synthesis and may therefore play a role in governing the total rate of fatty acid production. Possesses both acetoacetyl-ACP synthase and acetyl transacylase activities. Its substrate specificity determines the biosynthesis of branched-chain and/or straight-chain of fatty acids. The polypeptide is Beta-ketoacyl-[acyl-carrier-protein] synthase III (Serratia proteamaculans (strain 568)).